Here is a 1067-residue protein sequence, read N- to C-terminus: DNA-directed RNA polymerase subunit beta (1067 aa).

It belongs to the RNA polymerase beta chain family. In terms of assembly, in plastids the minimal PEP RNA polymerase catalytic core is composed of four subunits: alpha, beta, beta', and beta''. When a (nuclear-encoded) sigma factor is associated with the core the holoenzyme is formed, which can initiate transcription.

It is found in the plastid. Its subcellular location is the chloroplast. It carries out the reaction RNA(n) + a ribonucleoside 5'-triphosphate = RNA(n+1) + diphosphate. Functionally, DNA-dependent RNA polymerase catalyzes the transcription of DNA into RNA using the four ribonucleoside triphosphates as substrates. In Ipomoea purpurea (Common morning glory), this protein is DNA-directed RNA polymerase subunit beta.